Consider the following 574-residue polypeptide: uncharacterized protein (574 aa).

A run of 11 helical transmembrane segments spans residues 14-34 (FFPT…LFFG), 54-74 (VVPL…LGIV), 124-144 (WLMA…SDTA), 205-225 (ICKC…TGTI), 253-273 (SWMA…WFIV), 323-343 (LVIF…VIPG), 350-370 (KGYV…FIWP), 403-423 (FPWS…AVRV), 441-461 (MPFF…TEFS), 485-505 (PLYF…LPMA), and 520-540 (MIDM…ITAI). 2 N-linked (GlcNAc...) asparagine glycosylation sites follow: asparagine 565 and asparagine 569.

This sequence belongs to the SLC13A/DASS transporter (TC 2.A.47) family. NADC subfamily.

It localises to the membrane. This is an uncharacterized protein from Caenorhabditis elegans.